The primary structure comprises 635 residues: Threonine--tRNA ligase (635 aa).

Residues 1-58 (MIHVTCNQEAFELPEGASAMDLANKMKQSHCFVGALINDQEKDLSTTLQDGDTVLFLT) form the TGS domain. A catalytic region spans residues 237-528 (DHRVLGTKLD…LIEHFKGRFP (292 aa)). Zn(2+) is bound by residues Cys328, His379, and His505.

It belongs to the class-II aminoacyl-tRNA synthetase family. Homodimer. Requires Zn(2+) as cofactor.

It localises to the cytoplasm. The enzyme catalyses tRNA(Thr) + L-threonine + ATP = L-threonyl-tRNA(Thr) + AMP + diphosphate + H(+). Functionally, catalyzes the attachment of threonine to tRNA(Thr) in a two-step reaction: L-threonine is first activated by ATP to form Thr-AMP and then transferred to the acceptor end of tRNA(Thr). Also edits incorrectly charged L-seryl-tRNA(Thr). This Chlamydia trachomatis serovar L2b (strain UCH-1/proctitis) protein is Threonine--tRNA ligase.